We begin with the raw amino-acid sequence, 333 residues long: Glyceraldehyde-3-phosphate dehydrogenase (333 aa).

Residues 12–13, aspartate 36, arginine 80, and serine 120 contribute to the NAD(+) site; that span reads RI. D-glyceraldehyde 3-phosphate contacts are provided by residues 150–152, threonine 181, arginine 196, 209–210, and arginine 232; these read SCT and TG. Cysteine 151 acts as the Nucleophile in catalysis. Residue asparagine 314 participates in NAD(+) binding.

The protein belongs to the glyceraldehyde-3-phosphate dehydrogenase family. Homotetramer.

The protein localises to the cytoplasm. The enzyme catalyses D-glyceraldehyde 3-phosphate + phosphate + NAD(+) = (2R)-3-phospho-glyceroyl phosphate + NADH + H(+). Its pathway is carbohydrate degradation; glycolysis; pyruvate from D-glyceraldehyde 3-phosphate: step 1/5. Its function is as follows. Catalyzes the oxidative phosphorylation of glyceraldehyde 3-phosphate (G3P) to 1,3-bisphosphoglycerate (BPG) using the cofactor NAD. The first reaction step involves the formation of a hemiacetal intermediate between G3P and a cysteine residue, and this hemiacetal intermediate is then oxidized to a thioester, with concomitant reduction of NAD to NADH. The reduced NADH is then exchanged with the second NAD, and the thioester is attacked by a nucleophilic inorganic phosphate to produce BPG. The sequence is that of Glyceraldehyde-3-phosphate dehydrogenase (gapB) from Cereibacter sphaeroides (Rhodobacter sphaeroides).